A 119-amino-acid chain; its full sequence is Large ribosomal subunit protein bL20 (119 aa).

This sequence belongs to the bacterial ribosomal protein bL20 family.

In terms of biological role, binds directly to 23S ribosomal RNA and is necessary for the in vitro assembly process of the 50S ribosomal subunit. It is not involved in the protein synthesizing functions of that subunit. This Clostridium botulinum (strain Alaska E43 / Type E3) protein is Large ribosomal subunit protein bL20.